Consider the following 423-residue polypeptide: MTEFSSFSAPKGVPDYVPPDSAQFVAVRDGLLAAARQAGYSHIELPIFEDTALFARGVGESTDVVSKEMYTFADRGDRSVTLRPEGTAGVVRAVIEHGLDRGALPVKLCYAGPFFRYERPQAGRYRQLQQVGVEAIGVDDPALDAEVIAIADAGFRSLGLDGFRLEITSLGDESCRPQYRELLQEFLFGLDLDEDTRRRAGINPLRVLDDKRPELRAMTASAPVLLDHLSDVAKQHFDTVLAHLDALGVPYVINPRMVRGLDYYTKTAFEFVHDGLGAQSGIGGGGRYDGLMHQLGGQDLSGIGFGLGVDRTVLALRAEGKTAGDSARCDVFGVPLGEAAKLRLAVLAGRLRAAGVRVDLAYGDRGLKGAMRAAARSGARVALVAGDRDIEAGTVAVKDLTTGEQVSVSMDSVVAEVISRLAG.

The protein belongs to the class-II aminoacyl-tRNA synthetase family. In terms of assembly, homodimer.

The protein localises to the cytoplasm. The enzyme catalyses tRNA(His) + L-histidine + ATP = L-histidyl-tRNA(His) + AMP + diphosphate + H(+). In Mycobacterium bovis (strain ATCC BAA-935 / AF2122/97), this protein is Histidine--tRNA ligase (hisS).